Reading from the N-terminus, the 379-residue chain is Alcohol dehydrogenase class-2 isozyme 1 (379 aa).

Residues Cys-47, His-69, Cys-99, Cys-102, Cys-105, Cys-113, and Cys-176 each contribute to the Zn(2+) site. NAD(+) contacts are provided by residues 205–210 (GLGGVG), Asp-229, Lys-234, 298–300 (VGV), and Arg-374.

Belongs to the zinc-containing alcohol dehydrogenase family. Class-II subfamily. As to quaternary structure, homodimer. Requires Zn(2+) as cofactor.

The protein resides in the cytoplasm. The enzyme catalyses a primary alcohol + NAD(+) = an aldehyde + NADH + H(+). The catalysed reaction is a secondary alcohol + NAD(+) = a ketone + NADH + H(+). The chain is Alcohol dehydrogenase class-2 isozyme 1 (ADH2-1) from Oryctolagus cuniculus (Rabbit).